A 116-amino-acid polypeptide reads, in one-letter code: MKGLRSLAATTLALFLVFVFLGNSSCAPQRLLERRNWTPQAMLYLKGAQGRRFISDQSRRKDLSDRPLPERRSPNPQLLTIPEAATILLASLQKSPEDEEKNFDQTRFLEDSLLNW.

A signal peptide spans 1–26 (MKGLRSLAATTLALFLVFVFLGNSSC). The propeptide occupies 27–35 (APQRLLERR). Gln49 carries the post-translational modification Glutamine amide. 2 consecutive propeptides follow at residues 50-116 (GRRF…LLNW) and 74-116 (PNPQ…LLNW). Positions 55-73 (SDQSRRKDLSDRPLPERRS) are enriched in basic and acidic residues. A disordered region spans residues 55–77 (SDQSRRKDLSDRPLPERRSPNPQ).

Belongs to the spexin family. Expressed in the type I glomic cells within the carotid body (at protein level). Expressed predominantly in pancreas, testis, kidney, brain and placenta. Expressed in submucosal layer of esophagus and stomach fundus.

The protein localises to the secreted. It is found in the extracellular space. The protein resides in the cytoplasmic vesicle. Its subcellular location is the secretory vesicle. Its function is as follows. Plays a role as a central modulator of cardiovascular and renal function and nociception. Also plays a role in energy metabolism and storage. Inhibits adrenocortical cell proliferation with minor stimulation on corticosteroid release. Functionally, acts as a ligand for galanin receptors GALR2 and GALR3. Intracerebroventricular administration of the peptide induces an increase in arterial blood pressure, a decrease in both heart rate and renal excretion and delayed natriuresis. Intraventricular administration of the peptide induces antinociceptive activity. Also induces contraction of muscarinic-like stomach smooth muscles. Intraperitoneal administration of the peptide induces a reduction in food consumption and body weight. Inhibits long chain fatty acid uptake into adipocytes. In terms of biological role, intracerebroventricular administration of the peptide induces a decrease in heart rate, but no change in arterial pressure, and an increase in urine flow rate. Intraventricular administration of the peptide induces antinociceptive activity. The polypeptide is Spexin (SPX) (Homo sapiens (Human)).